Consider the following 242-residue polypeptide: Acetoacetyl-CoA reductase (242 aa).

NADP(+)-binding positions include 12-14 (RGI) and 82-86 (NAGIT). Substrate is bound by residues Asp-88 and 141-144 (QAGQ). Tyr-147 functions as the Proton acceptor in the catalytic mechanism. 177-180 (PGYI) contributes to the NADP(+) binding site. Position 178 to 179 (178 to 179 (GY)) interacts with substrate.

Belongs to the short-chain dehydrogenases/reductases (SDR) family.

The protein localises to the cytoplasm. The enzyme catalyses a (3R)-3-hydroxyacyl-CoA + NADP(+) = a 3-oxoacyl-CoA + NADPH + H(+). Its pathway is biopolymer metabolism; poly-(R)-3-hydroxybutanoate biosynthesis. This is Acetoacetyl-CoA reductase (phaB) from Paracoccus denitrificans.